The chain runs to 957 residues: Glycine dehydrogenase (decarboxylating) (957 aa).

Lys708 carries the N6-(pyridoxal phosphate)lysine modification.

Belongs to the GcvP family. The glycine cleavage system is composed of four proteins: P, T, L and H. Requires pyridoxal 5'-phosphate as cofactor.

It catalyses the reaction N(6)-[(R)-lipoyl]-L-lysyl-[glycine-cleavage complex H protein] + glycine + H(+) = N(6)-[(R)-S(8)-aminomethyldihydrolipoyl]-L-lysyl-[glycine-cleavage complex H protein] + CO2. In terms of biological role, the glycine cleavage system catalyzes the degradation of glycine. The P protein binds the alpha-amino group of glycine through its pyridoxal phosphate cofactor; CO(2) is released and the remaining methylamine moiety is then transferred to the lipoamide cofactor of the H protein. This chain is Glycine dehydrogenase (decarboxylating), found in Salmonella dublin (strain CT_02021853).